The following is a 476-amino-acid chain: Glutamyl-tRNA(Gln) amidotransferase subunit A (476 aa).

Catalysis depends on charge relay system residues Lys70 and Ser145. Ser169 serves as the catalytic Acyl-ester intermediate.

It belongs to the amidase family. GatA subfamily. Heterotrimer of A, B and C subunits.

The catalysed reaction is L-glutamyl-tRNA(Gln) + L-glutamine + ATP + H2O = L-glutaminyl-tRNA(Gln) + L-glutamate + ADP + phosphate + H(+). Its function is as follows. Allows the formation of correctly charged Gln-tRNA(Gln) through the transamidation of misacylated Glu-tRNA(Gln) in organisms which lack glutaminyl-tRNA synthetase. The reaction takes place in the presence of glutamine and ATP through an activated gamma-phospho-Glu-tRNA(Gln). The protein is Glutamyl-tRNA(Gln) amidotransferase subunit A of Methanosarcina mazei (strain ATCC BAA-159 / DSM 3647 / Goe1 / Go1 / JCM 11833 / OCM 88) (Methanosarcina frisia).